The sequence spans 148 residues: MTPELNLKSLGAKTTYIFEYNSQLLEAFPNPNPNLDPLITLECKEFTSLCPITSQPDFGVIFIRYIPKDKMVESKSLKLYLFSYRNHGSFHESCINTILLDLVKLLEPKYLEVYGDFASRGGIAIKPFVNYAIKEYQEFKEKRLLNAK.

The active-site Thioimide intermediate is Cys-50. Asp-57 (proton donor) is an active-site residue. Residues 72-74 and 91-92 each bind substrate; these read VES and HE.

Belongs to the GTP cyclohydrolase I family. QueF type 1 subfamily.

It localises to the cytoplasm. It carries out the reaction 7-aminomethyl-7-carbaguanine + 2 NADP(+) = 7-cyano-7-deazaguanine + 2 NADPH + 3 H(+). Its pathway is tRNA modification; tRNA-queuosine biosynthesis. Functionally, catalyzes the NADPH-dependent reduction of 7-cyano-7-deazaguanine (preQ0) to 7-aminomethyl-7-deazaguanine (preQ1). This chain is NADPH-dependent 7-cyano-7-deazaguanine reductase, found in Helicobacter pylori (strain HPAG1).